We begin with the raw amino-acid sequence, 123 residues long: Small ribosomal subunit protein uS12cz/uS12cy (123 aa).

This sequence belongs to the universal ribosomal protein uS12 family. In terms of assembly, part of the 30S ribosomal subunit.

The protein resides in the plastid. It is found in the chloroplast. Its function is as follows. With S4 and S5 plays an important role in translational accuracy. Located at the interface of the 30S and 50S subunits. This is Small ribosomal subunit protein uS12cz/uS12cy (rps12-A) from Arabis hirsuta (Hairy rock-cress).